The chain runs to 107 residues: Ferredoxin-6 (107 aa).

Positions 2 to 106 constitute a 2Fe-2S ferredoxin-type domain; it reads AKIIFIEHNG…GLVVHLPEKQ (105 aa). 4 residues coordinate [2Fe-2S] cluster: Cys-40, Cys-46, Cys-49, and Cys-87.

Belongs to the adrenodoxin/putidaredoxin family. It depends on [2Fe-2S] cluster as a cofactor.

Ferredoxins are small electron carrier proteins that participate in various redox reactions. FdVI is an essential protein required for growth of R.capsulatus. May be involved in Fe-S cluster assembly. This Rhodobacter capsulatus (Rhodopseudomonas capsulata) protein is Ferredoxin-6.